Here is a 325-residue protein sequence, read N- to C-terminus: Small ribosomal subunit protein RACK1 (325 aa).

WD repeat units follow at residues 5 to 48, 58 to 99, 100 to 141, 143 to 186, 187 to 227, 228 to 268, and 269 to 320; these read QMKL…WDVD, IGRP…WDLN, QGVS…WNTL, QCKY…WNLG, NCRL…LWDL, NEGK…WDLE, and DKKE…YQVS.

The protein belongs to the WD repeat G protein beta family. Ribosomal protein RACK1 subfamily.

Required for the expression of antimicrobial peptide nlp-29 in response to fungal infection or physical injury. The sequence is that of Small ribosomal subunit protein RACK1 (rack-1) from Caenorhabditis elegans.